Here is a 104-residue protein sequence, read N- to C-terminus: Iron-sulfur cluster assembly protein CyaY (104 aa).

The protein belongs to the frataxin family.

Its function is as follows. Involved in iron-sulfur (Fe-S) cluster assembly. May act as a regulator of Fe-S biogenesis. The chain is Iron-sulfur cluster assembly protein CyaY from Vibrio parahaemolyticus serotype O3:K6 (strain RIMD 2210633).